A 374-amino-acid chain; its full sequence is Carbamoyl phosphate synthase small chain (374 aa).

The segment at 1–186 is CPSase; that stretch reads MTEHAILVLE…DRNECKRAAP (186 aa). Positions 47, 237, and 239 each coordinate L-glutamine. One can recognise a Glutamine amidotransferase type-1 domain in the interval 189-374; it reads KVVAYDYGVK…RFITMMAAQS (186 aa). The active-site Nucleophile is the C265. L266, Q269, N307, G309, and F310 together coordinate L-glutamine. Active-site residues include H349 and E351.

Belongs to the CarA family. In terms of assembly, composed of two chains; the small (or glutamine) chain promotes the hydrolysis of glutamine to ammonia, which is used by the large (or ammonia) chain to synthesize carbamoyl phosphate. Tetramer of heterodimers (alpha,beta)4.

It catalyses the reaction hydrogencarbonate + L-glutamine + 2 ATP + H2O = carbamoyl phosphate + L-glutamate + 2 ADP + phosphate + 2 H(+). The enzyme catalyses L-glutamine + H2O = L-glutamate + NH4(+). It functions in the pathway amino-acid biosynthesis; L-arginine biosynthesis; carbamoyl phosphate from bicarbonate: step 1/1. Its pathway is pyrimidine metabolism; UMP biosynthesis via de novo pathway; (S)-dihydroorotate from bicarbonate: step 1/3. Functionally, small subunit of the glutamine-dependent carbamoyl phosphate synthetase (CPSase). CPSase catalyzes the formation of carbamoyl phosphate from the ammonia moiety of glutamine, carbonate, and phosphate donated by ATP, constituting the first step of 2 biosynthetic pathways, one leading to arginine and/or urea and the other to pyrimidine nucleotides. The small subunit (glutamine amidotransferase) binds and cleaves glutamine to supply the large subunit with the substrate ammonia. The polypeptide is Carbamoyl phosphate synthase small chain (Xylella fastidiosa (strain Temecula1 / ATCC 700964)).